Consider the following 321-residue polypeptide: tRNA U34 carboxymethyltransferase (321 aa).

Carboxy-S-adenosyl-L-methionine-binding positions include lysine 90, tryptophan 104, lysine 109, glycine 129, 151–153 (DPT), 180–181 (IE), methionine 195, tyrosine 199, and arginine 314.

It belongs to the class I-like SAM-binding methyltransferase superfamily. CmoB family. As to quaternary structure, homotetramer.

The catalysed reaction is carboxy-S-adenosyl-L-methionine + 5-hydroxyuridine(34) in tRNA = 5-carboxymethoxyuridine(34) in tRNA + S-adenosyl-L-homocysteine + H(+). In terms of biological role, catalyzes carboxymethyl transfer from carboxy-S-adenosyl-L-methionine (Cx-SAM) to 5-hydroxyuridine (ho5U) to form 5-carboxymethoxyuridine (cmo5U) at position 34 in tRNAs. This is tRNA U34 carboxymethyltransferase from Pasteurella multocida (strain Pm70).